Here is a 126-residue protein sequence, read N- to C-terminus: Large ribosomal subunit protein bL12 (126 aa).

The protein belongs to the bacterial ribosomal protein bL12 family. Homodimer. Part of the ribosomal stalk of the 50S ribosomal subunit. Forms a multimeric L10(L12)X complex, where L10 forms an elongated spine to which 2 to 4 L12 dimers bind in a sequential fashion. Binds GTP-bound translation factors.

Forms part of the ribosomal stalk which helps the ribosome interact with GTP-bound translation factors. Is thus essential for accurate translation. In Trichlorobacter lovleyi (strain ATCC BAA-1151 / DSM 17278 / SZ) (Geobacter lovleyi), this protein is Large ribosomal subunit protein bL12.